The chain runs to 353 residues: MATLRSLLLAALLWVPAEALSCYGDSGQPVDWFVVYKLPAHSGSRDTPKGLTYKYMDQNSDGWQDGVGYINSSEGAVGRSLQPLYRKNSSQLAFLLYNDQPPKSSSARDSTGHGHTKGVLLLDQEGGFWLVHSVPRFPPPASSGAYTWPPNAQTFGQTLLCVSLPFTQFARIGKQLTYTYPLVYDHKLEGFFAQKLPDLETVIKNQHVLHEPWNSSVILTSQAGATFQSFAKFGKFGDDLYSGWLAEALGTNLQVQFWQNSPGILPSNCSGAYQVLDVTQTGFPGPSRLTFSATEDHSKWCVAPQGPWACVGDMNRNKAETHRGGGTVCTQLPSFWKAFQSLVKDWKPCIEGS.

The N-terminal stretch at 1 to 19 is a signal peptide; that stretch reads MATLRSLLLAALLWVPAEA. Cysteines 22 and 161 form a disulfide. Asn71, Asn88, Asn214, and Asn268 each carry an N-linked (GlcNAc...) asparagine glycan. Intrachain disulfides connect Cys269-Cys349 and Cys310-Cys329. The active site involves His297.

Belongs to the DNase II family. Highly expressed in fetal liver macrophages.

The protein resides in the lysosome. It catalyses the reaction Endonucleolytic cleavage to nucleoside 3'-phosphates and 3'-phosphooligonucleotide end-products.. Its function is as follows. Hydrolyzes DNA under acidic conditions with a preference for double-stranded DNA. Plays a major role in the clearance of nucleic acids generated through apoptosis, hence preventing autoinflammation. Necessary for proper fetal development and for definitive erythropoiesis in fetal liver and bone marrow, where it degrades nuclear DNA expelled from erythroid precursor cells. This Mus musculus (Mouse) protein is Deoxyribonuclease-2-alpha (Dnase2).